The primary structure comprises 319 residues: MSMPLSFTSAVSPVAAIPTPRAAAETRTAASLRHAGKSGPVASPSQNTLNAQNLLNTLVGDISAAAPTAAAAPGVTRGQQSQEGDYALALLAKDVYSLNGQGAAGFNRLSDSALLGFGIDPASLHDAGSGFQAGIYSNDKQYVLAFAGTNDWRDWLSNVRQATGYDDVQYNQAVAAAKSAKAAFGDALVIAGHSLGGGLAATAALATGTVAVTFNAAGVSDYTLNRLGIDPAAAKKDAEAGGIRRYSEQYDMLTSTQESTSLIPDAIGHNITLANNDTLTGIDDWRPSKHLDRSLTAHGIDKVISSMAEQKPWEAKANA.

The signal sequence occupies residues 1–24; sequence MSMPLSFTSAVSPVAAIPTPRAAA.

It carries out the reaction a 1,2-diacyl-sn-glycero-3-phosphocholine + H2O = a 2-acyl-sn-glycero-3-phosphocholine + a fatty acid + H(+). This is Extracellular phospholipase A1 (phlA) from Serratia liquefaciens.